Reading from the N-terminus, the 148-residue chain is UPF0260 protein KPK_1978 (148 aa).

Belongs to the UPF0260 family.

The protein is UPF0260 protein KPK_1978 of Klebsiella pneumoniae (strain 342).